The primary structure comprises 198 residues: Putative 3-methyladenine DNA glycosylase (198 aa).

It belongs to the DNA glycosylase MPG family.

This Oceanobacillus iheyensis (strain DSM 14371 / CIP 107618 / JCM 11309 / KCTC 3954 / HTE831) protein is Putative 3-methyladenine DNA glycosylase.